A 292-amino-acid polypeptide reads, in one-letter code: Aquaporin-3 (292 aa).

Residues 1–24 lie on the Cytoplasmic side of the membrane; sequence MGRQKELMNRCGEMLHIRYRLLRQ. A helical membrane pass occupies residues 25-42; the sequence is ALAECLGTLILVMFGCGS. The Extracellular portion of the chain corresponds to 43–56; the sequence is VAQVVLSRGTHGGF. Residues 57-74 form a helical membrane-spanning segment; it reads LTINLAFGFAVTLGILVA. Residues 75–78 are Cytoplasmic-facing; it reads GQVS. The segment at residues 79-92 is an intramembrane region (discontinuously helical); it reads GAHLNPAVTFAMCF. An NPA 1 motif is present at residues 83–85; that stretch reads NPA. Over 93–100 the chain is Cytoplasmic; sequence LAREPWIK. The chain crosses the membrane as a helical span at residues 101–121; that stretch reads LPIYALAQTLGAFLGAGIVFG. Over 122–159 the chain is Extracellular; that stretch reads LYYDAIWAFANNELFVSGPNGTAGIFATYPSGHLDMVN. N-linked (GlcNAc...) asparagine glycosylation is present at asparagine 141. A helical transmembrane segment spans residues 160–177; the sequence is GFFDQFIGTAALIVCVLA. Residues 178–189 are Cytoplasmic-facing; that stretch reads IVDPYNNPVPRG. A helical transmembrane segment spans residues 190 to 206; that stretch reads LEAFTVGLVVLVIGTSM. Residues 207–210 are Extracellular-facing; that stretch reads GFNS. The discontinuously helical intramembrane region spans 211–224; it reads GYAVNPARDFGPRL. Positions 215–217 match the NPA 2 motif; that stretch reads NPA. The Extracellular portion of the chain corresponds to 225-242; sequence FTALAGWGSEVFTTGRHW. A helical membrane pass occupies residues 243 to 264; that stretch reads WWVPIVSPLLGSIAGVFVYQLM. The Cytoplasmic segment spans residues 265–292; sequence IGCHLEQPPPSTEEENVKLAHMKHKEQI.

The protein belongs to the MIP/aquaporin (TC 1.A.8) family. Homotetramer; each monomer provides an independent glycerol/water pore. Could also exist in other oligomeric states. In terms of tissue distribution, detected in principal cells in collecting ducts in kidney medulla (at protein level). Renal medulla and colon. Predominantly in the inner medulla. Expressed in basal layer of epidermal keratinocytes.

The protein resides in the cell membrane. It localises to the basolateral cell membrane. It carries out the reaction glycerol(in) = glycerol(out). It catalyses the reaction H2O(in) = H2O(out). The enzyme catalyses urea(in) = urea(out). The catalysed reaction is H2O2(out) = H2O2(in). In terms of biological role, aquaglyceroporins form homotetrameric transmembrane channels, with each monomer independently mediating glycerol and water transport across the plasma membrane along their osmotic gradient. Could also be permeable to urea. Also participates in cell permeability to H2O2 and H2O2-mediated signaling. In skin, transports glycerol to the epidermis and stratum corneum, where it maintains hydration, elasticity, and supports lipid biosynthesis for barrier repair. In kidney, contributes to the reabsorption of water, helping the body maintain proper fluid balance. In Mus musculus (Mouse), this protein is Aquaporin-3.